The primary structure comprises 456 residues: tRNA-2-methylthio-N(6)-dimethylallyladenosine synthase (456 aa).

An MTTase N-terminal domain is found at 18-136 (EFFFIQTFGC…FPEYLHRVQV (119 aa)). [4Fe-4S] cluster-binding residues include C27, C63, C97, C173, C177, and C180. Positions 159-391 (RKSNVKAFVT…AVNEGIVVGN (233 aa)) constitute a Radical SAM core domain. In terms of domain architecture, TRAM spans 392 to 455 (KAAEGKIYEV…SFSLVGEVVE (64 aa)).

It belongs to the methylthiotransferase family. MiaB subfamily. In terms of assembly, monomer. [4Fe-4S] cluster serves as cofactor.

Its subcellular location is the cytoplasm. It catalyses the reaction N(6)-dimethylallyladenosine(37) in tRNA + (sulfur carrier)-SH + AH2 + 2 S-adenosyl-L-methionine = 2-methylsulfanyl-N(6)-dimethylallyladenosine(37) in tRNA + (sulfur carrier)-H + 5'-deoxyadenosine + L-methionine + A + S-adenosyl-L-homocysteine + 2 H(+). Functionally, catalyzes the methylthiolation of N6-(dimethylallyl)adenosine (i(6)A), leading to the formation of 2-methylthio-N6-(dimethylallyl)adenosine (ms(2)i(6)A) at position 37 in tRNAs that read codons beginning with uridine. This Clostridium botulinum (strain Alaska E43 / Type E3) protein is tRNA-2-methylthio-N(6)-dimethylallyladenosine synthase.